Here is a 123-residue protein sequence, read N- to C-terminus: Small ribosomal subunit protein uS12 (123 aa).

The residue at position 89 (aspartate 89) is a 3-methylthioaspartic acid. The disordered stretch occupies residues 104 to 123; sequence TAGVKDRKQARSKYGAKRPK. A compositionally biased stretch (basic residues) spans 113–123; it reads ARSKYGAKRPK.

It belongs to the universal ribosomal protein uS12 family. As to quaternary structure, part of the 30S ribosomal subunit. Contacts proteins S8 and S17. May interact with IF1 in the 30S initiation complex.

In terms of biological role, with S4 and S5 plays an important role in translational accuracy. Functionally, interacts with and stabilizes bases of the 16S rRNA that are involved in tRNA selection in the A site and with the mRNA backbone. Located at the interface of the 30S and 50S subunits, it traverses the body of the 30S subunit contacting proteins on the other side and probably holding the rRNA structure together. The combined cluster of proteins S8, S12 and S17 appears to hold together the shoulder and platform of the 30S subunit. The polypeptide is Small ribosomal subunit protein uS12 (Neisseria gonorrhoeae (strain ATCC 700825 / FA 1090)).